Consider the following 153-residue polypeptide: Bacteriohemerythrin (153 aa).

7 residues coordinate Fe cation: His21, His57, Glu61, His76, His80, His115, and Asp120.

Belongs to the hemerythrin family. In terms of assembly, monomer.

Oxygen-binding protein. May be involved in a storage mechanism or for delivery to oxygen-requiring enzymes. The oxygen-binding site contains two iron atoms. The protein is Bacteriohemerythrin of Stenotrophomonas maltophilia (strain R551-3).